We begin with the raw amino-acid sequence, 463 residues long: L-seryl-tRNA(Sec) selenium transferase (463 aa).

N6-(pyridoxal phosphate)lysine is present on Lys295.

This sequence belongs to the SelA family. As to quaternary structure, homodecamer; pentamer of dimers. Binds only one seryl-tRNA(Sec) per dimer. The cofactor is pyridoxal 5'-phosphate.

Its subcellular location is the cytoplasm. It catalyses the reaction L-seryl-tRNA(Sec) + selenophosphate + H(+) = L-selenocysteinyl-tRNA(Sec) + phosphate. Its pathway is aminoacyl-tRNA biosynthesis; selenocysteinyl-tRNA(Sec) biosynthesis; selenocysteinyl-tRNA(Sec) from L-seryl-tRNA(Sec) (bacterial route): step 1/1. In terms of biological role, converts seryl-tRNA(Sec) to selenocysteinyl-tRNA(Sec) required for selenoprotein biosynthesis. The protein is L-seryl-tRNA(Sec) selenium transferase of Salmonella dublin (strain CT_02021853).